The following is a 467-amino-acid chain: Ribosomal RNA small subunit methyltransferase F (467 aa).

S-adenosyl-L-methionine-binding positions include 119 to 125 (ASAPGSK), Glu-143, Asp-170, and Asp-188. Cys-241 serves as the catalytic Nucleophile.

The protein belongs to the class I-like SAM-binding methyltransferase superfamily. RsmB/NOP family.

The protein resides in the cytoplasm. It catalyses the reaction cytidine(1407) in 16S rRNA + S-adenosyl-L-methionine = 5-methylcytidine(1407) in 16S rRNA + S-adenosyl-L-homocysteine + H(+). Functionally, specifically methylates the cytosine at position 1407 (m5C1407) of 16S rRNA. This is Ribosomal RNA small subunit methyltransferase F from Shewanella amazonensis (strain ATCC BAA-1098 / SB2B).